We begin with the raw amino-acid sequence, 254 residues long: D-aminoacyl-tRNA deacylase (254 aa).

The protein belongs to the DtdA deacylase family. As to quaternary structure, monomer. Zn(2+) is required as a cofactor.

The catalysed reaction is a D-aminoacyl-tRNA + H2O = a tRNA + a D-alpha-amino acid + H(+). It catalyses the reaction glycyl-tRNA(Ala) + H2O = tRNA(Ala) + glycine + H(+). In terms of biological role, D-aminoacyl-tRNA deacylase with broad substrate specificity. By recycling D-aminoacyl-tRNA to D-amino acids and free tRNA molecules, this enzyme counteracts the toxicity associated with the formation of D-aminoacyl-tRNA entities in vivo. The protein is D-aminoacyl-tRNA deacylase of Methanococcus vannielii (strain ATCC 35089 / DSM 1224 / JCM 13029 / OCM 148 / SB).